A 405-amino-acid polypeptide reads, in one-letter code: DNA polymerase IV 1 (405 aa).

Residues 23-203 form the UmuC domain; it reads IAHIDCDAFY…RPVTTIWGVG (181 aa). Residues Asp-27 and Asp-120 each contribute to the Mg(2+) site. Residue Glu-121 is part of the active site.

Belongs to the DNA polymerase type-Y family. As to quaternary structure, monomer. Mg(2+) serves as cofactor.

The protein localises to the cytoplasm. It carries out the reaction DNA(n) + a 2'-deoxyribonucleoside 5'-triphosphate = DNA(n+1) + diphosphate. In terms of biological role, poorly processive, error-prone DNA polymerase involved in untargeted mutagenesis. Copies undamaged DNA at stalled replication forks, which arise in vivo from mismatched or misaligned primer ends. These misaligned primers can be extended by PolIV. Exhibits no 3'-5' exonuclease (proofreading) activity. May be involved in translesional synthesis, in conjunction with the beta clamp from PolIII. The polypeptide is DNA polymerase IV 1 (dinB1) (Agrobacterium fabrum (strain C58 / ATCC 33970) (Agrobacterium tumefaciens (strain C58))).